A 338-amino-acid polypeptide reads, in one-letter code: Cytoskeleton protein RodZ (338 aa).

Over 1 to 111 (MNTEATHEEN…LGKSRKKRDG (111 aa)) the chain is Cytoplasmic. One can recognise an HTH cro/C1-type domain in the interval 19–71 (LRLAREQLGLSQQVVAERLCLKVSTVRDIEEDKAPADLASTFLRGYIRSYARL). Residues 30–49 (QQVVAERLCLKVSTVRDIEE) constitute a DNA-binding region (H-T-H motif). A helical; Signal-anchor for type II membrane protein transmembrane segment spans residues 112-132 (WLMSFTWLVLFVVVGLTGAWW). The Periplasmic segment spans residues 133-338 (WQNHKAQQEE…TLNAEQSVTQ (206 aa)). Polar residues-rich tracts occupy residues 147–180 (ADQS…QDQA) and 189–214 (GDTQ…SQQP). Positions 147-245 (ADQSSAELSQ…AQSQLPVGQA (99 aa)) are disordered. Residues 220–239 (SQANTDTAAQQNTTQPAQSQ) are compositionally biased toward low complexity.

Belongs to the RodZ family.

Its subcellular location is the cell inner membrane. In terms of biological role, cytoskeletal protein that is involved in cell-shape control through regulation of the length of the long axis. The protein is Cytoskeleton protein RodZ of Cronobacter sakazakii (strain ATCC BAA-894) (Enterobacter sakazakii).